The sequence spans 84 residues: Defensin-like protein 199 (84 aa).

Residues 1-24 form the signal peptide; it reads MAITMRTLVAFVFTIFFIISFVHS. Disulfide bonds link Cys40-Cys80, Cys47-Cys72, Cys56-Cys78, and Cys60-Cys79.

This sequence belongs to the DEFL family.

The protein resides in the secreted. This chain is Defensin-like protein 199, found in Arabidopsis thaliana (Mouse-ear cress).